A 477-amino-acid chain; its full sequence is Calcium uptake protein 1, mitochondrial (477 aa).

Residues 1-33 (MFRLNTLSALAELAVGSRWYHGASQPTQTKRRL) constitute a mitochondrion transit peptide. A disordered region spans residues 57 to 107 (AESPPCVNSKKPDTEDKERNKDSGEVSSREGRAADAAAEPYPEDKKKKRSG). Over residues 66–89 (KKPDTEDKERNKDSGEVSSREGRA) the composition is skewed to basic and acidic residues. The segment at 101–112 (KKKKRSGFRDRK) is polybasic region. Ser-124 carries the phosphoserine; by PKB modification. A k/R-ring region spans residues 128 to 131 (KIFR). One can recognise an EF-hand 1 domain in the interval 220-255 (TPQRNFEIAFKMFDLNGDGEVDMEEFEQVQSIIRSQ). Asp-233, Asn-235, Asp-237, Glu-239, and Glu-244 together coordinate Ca(2+). Positions 261-265 (RHRDR) are k/R-ring. Positions 356 to 376 (KDGKGLTFQEVENFFTFLKNI) constitute an EF-hand 2; degenerate domain. The EF-hand 3 domain maps to 410–445 (LSDHVCDVVFALFDCDGNGELSNKEFVSIMKQRLMR). Residues Asp-423, Asp-425, Asn-427, Glu-429, and Glu-434 each coordinate Ca(2+). Arg-457 carries the asymmetric dimethylarginine modification. The segment at 457–467 (RLMQAMWKCAQ) is C-helix region.

Belongs to the MICU1 family. MICU1 subfamily. In terms of assembly, heterodimer; disulfide-linked; heterodimerizes with MICU2 or MICU3. Homodimer; disulfide-linked. Component of the uniplex complex, composed of MCU, EMRE/SMDT1, MICU1 and MICU2 (or MICU3) in a 4:4:1:1 stoichiometry. The composition of calcium sensors within the uniplex complex can differ depending on tissues: a MICU1 homodimer can be present instead of the MICU1-MICU2 heterodimer in skeletal-muscle and kidney. MICU1 is recruited to the uniplex complex by EMRE/SMDT1, and it associates with MCU at low calcium levels, occluding the pore of the MCU channel. Associates with the MICOS complex. Interacts with SLC25A23. Interacts with CHCHD4/MIA40; which introduces the interchain disulfide bond with MICU2. Interacts (when methylated) with UCP2; leading to decrease the calcium sensitivity of MICU1. As to quaternary structure, heterodimer; disulfide-linked; heterodimerizes with MICU2 or MICU3. Heterodimerizes with MICU3 in skeletal muscle. Component of the uniplex complex, composed of MCU, EMRE/SMDT1, MICU1 and MICU2 (or MICU3) in a 4:4:1:1 stoichiometry. Also localizes to mitochondrial cristae junctions. Phosphorylation at Ser-124 by AKT1 impairs its maturation and stability. Post-translationally, asymmetric dimethylation at Arg-457 by PRMT1 decreases the calcium sensitivity of MICU1 by promoting interaction with UCP2. In terms of processing, degraded by YME1L1 when not complexed as homodimer or heterodimer. Not degraded when complexed as homodimer or heterodimer; the presence of the interchain disulfide bond protecting MICU1 from degradation by YME1L1. In terms of tissue distribution, expressed in skeletal muscle, heart, kidney, liver, brain, lung, fat and spleen. As to expression, specifically expressed in the skeletal muscle.

It is found in the mitochondrion intermembrane space. The protein localises to the mitochondrion inner membrane. Its function is as follows. Calcium sensor of the mitochondrial calcium uniporter (MCU) channel, which senses calcium level via its EF-hand domains. MICU1 and MICU2 (or MICU3) form a disulfide-linked heterodimer that stimulates and inhibits MCU activity, depending on the concentration of calcium. At low calcium levels, MICU1 occludes the pore of the MCU channel, preventing mitochondrial calcium uptake. At higher calcium levels, calcium-binding to MICU1 and MICU2 (or MICU3) induces a conformational change that weakens MCU-MICU1 interactions and moves the MICU1-MICU2 heterodimer away from the pore, allowing calcium permeation through the MCU channel. Also required to protect against manganese toxicity by preventing manganese uptake by MCU: mechanistically, manganese-binding to its EF-hand domains does not induce any conformational change, maintaining MCU pore occlusion. Acts as a regulator of mitochondrial cristae structure independently of its ability to regulate the mitochondrial calcium uniporter channel. Regulates glucose-dependent insulin secretion in pancreatic beta-cells by regulating mitochondrial calcium uptake. Induces T-helper 1-mediated autoreactivity, which is accompanied by the release of IFNG. In terms of biological role, isoform that regulates mitochondrial calcium uniporter (MCU) in the skeletal muscle. Compared to other isoforms, this isoform has higher affinity for calcium, promoting mitochondrial calcium uptake at lower calcium concentrations. This allows a rapid response of mitochondrial metabolism and ensures sustained ATP production needed for resistance and strenuous exercise. The chain is Calcium uptake protein 1, mitochondrial from Mus musculus (Mouse).